The sequence spans 329 residues: Red chlorophyll catabolite reductase 1, chloroplastic (329 aa).

Over residues 1-11 the composition is skewed to pro residues; that stretch reads MLQLRSPPPAT. A chloroplast-targeting transit peptide spans 1 to 50; it reads MLQLRSPPPATSSPSSAVSFPTLAPRLLPLRRRRRGAGSQLGGKTSSAVR. Positions 1–61 are disordered; sequence MLQLRSPPPA…SSAAAPGATE (61 aa). Composition is skewed to low complexity over residues 12–28 and 46–59; these read SSPSSAVSFPTLAPRLL and SSAVRASSAAAPGA. Red chlorophyll catabolite is bound by residues Glu163, 216-218, and Asp299; that span reads YRS.

In terms of tissue distribution, expressed in leaves. Expressed at low levels in roots, stems, panicles and seeds.

The protein localises to the plastid. It is found in the chloroplast. It carries out the reaction primary fluorescent chlorophyll catabolite + 2 oxidized [2Fe-2S]-[ferredoxin] = red chlorophyll catabolite + 2 reduced [2Fe-2S]-[ferredoxin] + 3 H(+). The protein operates within porphyrin-containing compound metabolism; chlorophyll degradation. In terms of biological role, catalyzes the key reaction of chlorophyll catabolism, porphyrin macrocycle cleavage of pheophorbide a (pheide a) to a primary fluorescent catabolite (pFCC). Works in a two-step reaction with pheophorbide a oxygenase (PaO) by reducing the C20/C1 double bond of the intermediate, RCC. Belongs to the chlorophyll catabolic enzymes (CCEs). May play a role in senescence and response to wounding. The sequence is that of Red chlorophyll catabolite reductase 1, chloroplastic from Oryza sativa subsp. japonica (Rice).